The chain runs to 520 residues: Translation initiation factor IF3-1, mitochondrial (520 aa).

The N-terminal 66 residues, 1–66 (MAIWRIINRS…SNIFQNLRFL (66 aa)), are a transit peptide targeting the mitochondrion. Positions 271–282 (ARVKEESPKPDS) are enriched in basic and acidic residues. The interval 271–520 (ARVKEESPKP…YGIFSTPKTK (250 aa)) is disordered. Residues 336 to 361 (EPQSPNQHVNPQRPRFSNQAPNQQPT) are compositionally biased toward polar residues. The segment covering 369 to 379 (PNQPPSAPRPQ) has biased composition (pro residues). Polar residues-rich tracts occupy residues 404-422 (NQAPNQQSTGRFNPQFPNQ) and 458-468 (FQNQAPNQQPT). The segment covering 473-485 (PQPPNPPRAPPRP) has biased composition (pro residues).

Belongs to the IF-3 family. As to quaternary structure, monomer.

Its subcellular location is the mitochondrion. Functionally, IF-3 binds to the 30S ribosomal subunit and shifts the equilibrium between 70S ribosomes and their 50S and 30S subunits in favor of the free subunits, thus enhancing the availability of 30S subunits on which protein synthesis initiation begins. The protein is Translation initiation factor IF3-1, mitochondrial of Arabidopsis thaliana (Mouse-ear cress).